Consider the following 239-residue polypeptide: Protein GrpE (239 aa).

Disordered stretches follow at residues 1 to 56 (MIEN…KNTI) and 208 to 239 (SMGP…SEDV). Positions 40 to 53 (TSQKKEAINTEELK) are enriched in basic and acidic residues. Residues 224–239 (TVEEDVNSEVNTSEDV) are compositionally biased toward acidic residues.

Belongs to the GrpE family. In terms of assembly, homodimer.

Its subcellular location is the cytoplasm. Participates actively in the response to hyperosmotic and heat shock by preventing the aggregation of stress-denatured proteins, in association with DnaK and GrpE. It is the nucleotide exchange factor for DnaK and may function as a thermosensor. Unfolded proteins bind initially to DnaJ; upon interaction with the DnaJ-bound protein, DnaK hydrolyzes its bound ATP, resulting in the formation of a stable complex. GrpE releases ADP from DnaK; ATP binding to DnaK triggers the release of the substrate protein, thus completing the reaction cycle. Several rounds of ATP-dependent interactions between DnaJ, DnaK and GrpE are required for fully efficient folding. This Prochlorococcus marinus (strain MIT 9215) protein is Protein GrpE.